Consider the following 452-residue polypeptide: Asparagine--tRNA ligase (452 aa).

This sequence belongs to the class-II aminoacyl-tRNA synthetase family. In terms of assembly, homodimer.

Its subcellular location is the cytoplasm. It carries out the reaction tRNA(Asn) + L-asparagine + ATP = L-asparaginyl-tRNA(Asn) + AMP + diphosphate + H(+). This is Asparagine--tRNA ligase from Mycoplasma mycoides subsp. mycoides SC (strain CCUG 32753 / NCTC 10114 / PG1).